The chain runs to 268 residues: Indole-3-glycerol phosphate synthase (268 aa).

Belongs to the TrpC family.

It carries out the reaction 1-(2-carboxyphenylamino)-1-deoxy-D-ribulose 5-phosphate + H(+) = (1S,2R)-1-C-(indol-3-yl)glycerol 3-phosphate + CO2 + H2O. It participates in amino-acid biosynthesis; L-tryptophan biosynthesis; L-tryptophan from chorismate: step 4/5. This is Indole-3-glycerol phosphate synthase from Parafrankia sp. (strain EAN1pec).